Reading from the N-terminus, the 89-residue chain is Small ribosomal subunit protein uS15 (89 aa).

It belongs to the universal ribosomal protein uS15 family. As to quaternary structure, part of the 30S ribosomal subunit. Forms a bridge to the 50S subunit in the 70S ribosome, contacting the 23S rRNA.

Its function is as follows. One of the primary rRNA binding proteins, it binds directly to 16S rRNA where it helps nucleate assembly of the platform of the 30S subunit by binding and bridging several RNA helices of the 16S rRNA. Forms an intersubunit bridge (bridge B4) with the 23S rRNA of the 50S subunit in the ribosome. In Sodalis glossinidius (strain morsitans), this protein is Small ribosomal subunit protein uS15.